The chain runs to 408 residues: S100P-binding protein (408 aa).

Disordered stretches follow at residues 1-111 (MMCS…AETP), 162-234 (KDET…SENP), and 271-291 (VSTS…MKGH). Acidic residues predominate over residues 28–59 (SLDEDGLDDSLLELSEGEEDDGDVNYTEEEID). Composition is skewed to basic and acidic residues over residues 77–86 (DGGHVEKGER) and 162–185 (KDET…REDG). The residue at position 187 (serine 187) is a Phosphoserine. Residues 188–234 (PNESKLCTESEGISPNNSAWNGPQLSSSNNNFQQTVSDKNMPDSENP) show a composition bias toward polar residues. The segment covering 280-291 (VLNKDSGKMKGH) has biased composition (basic and acidic residues).

In terms of assembly, interacts with S100P. As to expression, expressed in brain, spleen, and lung. Not detected in pancreas or liver. In pancreas, expressed predominantly in islet cells and to a lesser extent in acinar cells, but not expressed in ductal cells. Up-regulated in various pancreatic ductal adenocarcinomas and pancreatic intraepithelial neoplasias. Detected in pancreatic ductal adenocarcinoma cells (at protein level). Not detected in non-neoplastic ductal epithelium (at protein level).

The protein resides in the nucleus. The sequence is that of S100P-binding protein from Homo sapiens (Human).